A 100-amino-acid chain; its full sequence is Large ribosomal subunit protein bL27 (100 aa).

A propeptide spanning residues 1–9 (MLVMNLQLF) is cleaved from the precursor.

It belongs to the bacterial ribosomal protein bL27 family. Post-translationally, the N-terminus is cleaved by ribosomal processing cysteine protease Prp.

The protein is Large ribosomal subunit protein bL27 of Clostridium botulinum (strain 657 / Type Ba4).